The following is a 457-amino-acid chain: Argininosuccinate lyase (457 aa).

This sequence belongs to the lyase 1 family. Argininosuccinate lyase subfamily.

The protein localises to the cytoplasm. The enzyme catalyses 2-(N(omega)-L-arginino)succinate = fumarate + L-arginine. The protein operates within amino-acid biosynthesis; L-arginine biosynthesis; L-arginine from L-ornithine and carbamoyl phosphate: step 3/3. The protein is Argininosuccinate lyase of Histophilus somni (strain 129Pt) (Haemophilus somnus).